The sequence spans 169 residues: S-ribosylhomocysteine lyase (169 aa).

Fe cation-binding residues include H54, H58, and C128.

This sequence belongs to the LuxS family. In terms of assembly, homodimer. Fe cation serves as cofactor.

The catalysed reaction is S-(5-deoxy-D-ribos-5-yl)-L-homocysteine = (S)-4,5-dihydroxypentane-2,3-dione + L-homocysteine. Involved in the synthesis of autoinducer 2 (AI-2) which is secreted by bacteria and is used to communicate both the cell density and the metabolic potential of the environment. The regulation of gene expression in response to changes in cell density is called quorum sensing. Catalyzes the transformation of S-ribosylhomocysteine (RHC) to homocysteine (HC) and 4,5-dihydroxy-2,3-pentadione (DPD). In Shewanella pealeana (strain ATCC 700345 / ANG-SQ1), this protein is S-ribosylhomocysteine lyase.